The following is a 189-amino-acid chain: MAREGEGGGRGGREERDSEFVDRLVHINRVAKVVKGGRRFGFAALVVVGDQKGRVGYGHGKAREVPEAIRKATESAKRALIRVPLREGRTLHHDVNGRHGAGRVVLRAAPAGTGIIAGGPMRAVFETLGMHDVVAKSQGSSNPYNMIRATFDALQREDSPRAVAARRSLKVSVLQGRRLGGDTETAAEG.

Positions 20–83 constitute an S5 DRBM domain; sequence FVDRLVHINR…ESAKRALIRV (64 aa).

It belongs to the universal ribosomal protein uS5 family. Part of the 30S ribosomal subunit. Contacts proteins S4 and S8.

In terms of biological role, with S4 and S12 plays an important role in translational accuracy. Its function is as follows. Located at the back of the 30S subunit body where it stabilizes the conformation of the head with respect to the body. This Beijerinckia indica subsp. indica (strain ATCC 9039 / DSM 1715 / NCIMB 8712) protein is Small ribosomal subunit protein uS5.